Here is a 943-residue protein sequence, read N- to C-terminus: UvrABC system protein A (943 aa).

31–38 (GLSGSGKS) contacts ATP. The C4-type zinc finger occupies 253–280 (CPHCGYSVPELEPRLFSFNNPAGACPTC). ABC transporter domains are found at residues 310–587 (WDRR…PNSI) and 607–937 (LDKK…RFLK). 640 to 647 (GVSGSGKS) contacts ATP. The C4-type zinc finger occupies 740–766 (CEACQGDGVLKVEMHFLPDVYVPCDQC).

It belongs to the ABC transporter superfamily. UvrA family. As to quaternary structure, forms a heterotetramer with UvrB during the search for lesions.

It is found in the cytoplasm. The UvrABC repair system catalyzes the recognition and processing of DNA lesions. UvrA is an ATPase and a DNA-binding protein. A damage recognition complex composed of 2 UvrA and 2 UvrB subunits scans DNA for abnormalities. When the presence of a lesion has been verified by UvrB, the UvrA molecules dissociate. The protein is UvrABC system protein A of Haemophilus influenzae (strain ATCC 51907 / DSM 11121 / KW20 / Rd).